We begin with the raw amino-acid sequence, 276 residues long: Rhomboid protease GlpG (276 aa).

6 helical membrane-spanning segments follow: residues 94-114 (GPVTWVVMIACVVVFIAMQIL), 142-162 (ALMHFSLMHILFNLLWWWYLG), 169-189 (LGSGKLIVITLISALLSGYVQ), 192-212 (FSGPWFGGLSGVVYALMGYVW), 229-249 (LIIFALIWIIAGWFDLFGMSM), and 250-270 (ANGAHIAGLAVGLAMAFVDSL). Residue S201 is the Nucleophile of the active site. H254 is an active-site residue.

The protein belongs to the peptidase S54 family.

It localises to the cell inner membrane. It carries out the reaction Cleaves type-1 transmembrane domains using a catalytic dyad composed of serine and histidine that are contributed by different transmembrane domains.. Its function is as follows. Rhomboid-type serine protease that catalyzes intramembrane proteolysis. This is Rhomboid protease GlpG from Shigella boydii serotype 4 (strain Sb227).